A 159-amino-acid polypeptide reads, in one-letter code: Phosphopantetheine adenylyltransferase (159 aa).

Residue T9 participates in substrate binding. Residues 9-10 and H17 each bind ATP; that span reads TF. Positions 41, 73, and 87 each coordinate substrate. Residues 88-90, E98, and 123-129 contribute to the ATP site; these read GLR and YMFISAT.

This sequence belongs to the bacterial CoaD family. In terms of assembly, homohexamer. Mg(2+) is required as a cofactor.

Its subcellular location is the cytoplasm. The enzyme catalyses (R)-4'-phosphopantetheine + ATP + H(+) = 3'-dephospho-CoA + diphosphate. It functions in the pathway cofactor biosynthesis; coenzyme A biosynthesis; CoA from (R)-pantothenate: step 4/5. Its function is as follows. Reversibly transfers an adenylyl group from ATP to 4'-phosphopantetheine, yielding dephospho-CoA (dPCoA) and pyrophosphate. The sequence is that of Phosphopantetheine adenylyltransferase from Nitrosomonas europaea (strain ATCC 19718 / CIP 103999 / KCTC 2705 / NBRC 14298).